The following is a 207-amino-acid chain: Ribosomal RNA large subunit methyltransferase E (207 aa).

Residues glycine 56, tryptophan 58, aspartate 76, aspartate 94, and aspartate 116 each contribute to the S-adenosyl-L-methionine site. Lysine 156 serves as the catalytic Proton acceptor.

The protein belongs to the class I-like SAM-binding methyltransferase superfamily. RNA methyltransferase RlmE family.

The protein localises to the cytoplasm. The catalysed reaction is uridine(2552) in 23S rRNA + S-adenosyl-L-methionine = 2'-O-methyluridine(2552) in 23S rRNA + S-adenosyl-L-homocysteine + H(+). In terms of biological role, specifically methylates the uridine in position 2552 of 23S rRNA at the 2'-O position of the ribose in the fully assembled 50S ribosomal subunit. The polypeptide is Ribosomal RNA large subunit methyltransferase E (Desulfatibacillum aliphaticivorans).